The following is a 654-amino-acid chain: MIEEGGNKRKTMAEKRQLFIEMRAQNFDVIRLSTYRTACKLRFVQKRCNLHLVDIWNMIEAFRDNGLNTLDHATEISVSRLETVISSIYYQLNKRLPSTHQINVEQSISLLLNFMIAAYDSEGRGKLTVFSVKAMLATMCGGKMLDKLRYIFSQMSDSNGLMMFGKLDQFLKEALKLPTAVFEGPSFGYTEHAVRTCFPQQKKIMLNMFLDTMMADPPPQCLVWLPLMHRLAHVENVFHPVECSYCHCESMMGFRYRCQQCHNYQLCQNCFWRGHAGGPHSNQHQMKELSSWKSPAKKLSHAISKSLGCVPSREPPHPVFPEQPEKPLDLAHIVPPRPLTNMNDTMVSHMSSGVPTPTKRLQYGQDMPNLLADEHALIASYVARLQHCTRVLDSPSRLDEEHRLIARYAARLAAEAGNMTRPPTDASFNFDANKQQRQLIAELENKNREILQEIQRLRLEHEQASQPTPEKAQQNPTLLAELRLLRQRKDELEQRMSALQESRRELMVQLEGLMKLLKAQATGSPHTSPTHGGGRSMPMPVRSTSAGSTPTHGPQDSLSGVGGDVQEAFAQGTRRNLRNDLLVAADSITNTMSSLVKELHSGETQRFPLVSSSPSCPLPCPTIPTHSPSFHATFPSRNTRDLHPVPPSHMVSLY.

An N-acetylmethionine modification is found at methionine 1. Phosphothreonine occurs at positions 11, 69, 179, and 212. The ZZ-type zinc finger occupies 238-294; sequence FHPVECSYCHCESMMGFRYRCQQCHNYQLCQNCFWRGHAGGPHSNQHQMKELSSWKS. Positions 243, 246, 258, 261, 267, 270, 280, and 284 each coordinate Zn(2+). Residue serine 394 is modified to Phosphoserine. Positions 399–448 are syntrophin-binding region; the sequence is DEEHRLIARYAARLAAEAGNMTRPPTDASFNFDANKQQRQLIAELENKNR. Threonine 424 carries the post-translational modification Phosphothreonine. The stretch at 429–519 forms a coiled coil; sequence NFDANKQQRQ…LEGLMKLLKA (91 aa). The segment at 520-562 is disordered; sequence QATGSPHTSPTHGGGRSMPMPVRSTSAGSTPTHGPQDSLSGVG. Polar residues-rich tracts occupy residues 521 to 530 and 542 to 558; these read ATGSPHTSPT and RSTS…QDSL.

The protein belongs to the dystrophin family. Dystrobrevin subfamily. As to quaternary structure, interacts with dystrophin short form DP71 and syntrophins SNTG1 and SNTG2. Binds DTNBP1. Forms a specific complex composed of DMD, SNTB2 and SNTA1 in neuron; the interaction with SNTB2 and SNTA1 is DMD independent. Interacts with UTRN and dystrophin short form DP71 in the kidney and liver. Interacts with SNTB1, SNTB2 and SNTA1 in kidney and liver. Interacts with KIF5A. Interacts with HMG20A and HMG20B. Interacts with OLFM1. Interacts with PRKAR2B and PRKAR1A. In terms of processing, phosphorylated by PKA. Phosphorylation at Thr-11 alters the interaction with KIF5A. Expressed in neurons. In the isocortex, expressed most prominently in the somata (including the nuclei) and the dendrites of the pyramidal cells. Expressed in the hippocampus CA1, CA2, and CA3 neurons, namely in the initial segments of dendrites. Expressed in the Purkinje cells, molecular layer interneurons, and granule cells of cerebellum. Expressed in axon fascicles associated with the spinal trigeminal tract and in the internal capsule in the brainstem.

The protein resides in the cytoplasm. Its subcellular location is the postsynaptic density. The protein localises to the cell projection. It localises to the dendrite. It is found in the basal cell membrane. The protein resides in the postsynapse. Its subcellular location is the nucleus. Scaffolding protein that assembles DMD and SNTA1 molecules to the basal membrane of kidney cells and liver sinusoids. May function as a repressor of the SYN1 promoter through the binding of repressor element-1 (RE-1), in turn regulates SYN1 expression and may be involved in cell proliferation regulation during the early phase of neural differentiation. May be required for proper maturation and function of a subset of inhibitory synapses. The chain is Dystrobrevin beta from Rattus norvegicus (Rat).